Reading from the N-terminus, the 94-residue chain is Cell division protein FtsB (94 aa).

Over 1 to 3 (MRT) the chain is Cytoplasmic. The helical transmembrane segment at 4–21 (FAIFLLIALGWLQYTLWF) threads the bilayer. Topologically, residues 22–94 (GKNGMSDYAQ…YRIIDENSEG (73 aa)) are periplasmic. Positions 33-71 (SNDVALQEEVNQGLRNRNEQMFAEIDDLKKGSEAIEERA) form a coiled coil.

It belongs to the FtsB family. Part of a complex composed of FtsB, FtsL and FtsQ.

It localises to the cell inner membrane. Its function is as follows. Essential cell division protein. May link together the upstream cell division proteins, which are predominantly cytoplasmic, with the downstream cell division proteins, which are predominantly periplasmic. This chain is Cell division protein FtsB, found in Aliivibrio fischeri (strain ATCC 700601 / ES114) (Vibrio fischeri).